We begin with the raw amino-acid sequence, 1089 residues long: MSALPEEVNRTLLQIVQAFASPDNQIRSVAEKALSEEWITENNIEYLLTFLAEQAAFSQDTTVAALSAVLFRKLALKAPPSSKLMIMSKNITHIRKEVLAQIRSSLLKGFLSERADSIRHKLSDAIAECVQDDLPAWPELLQALIESLKSGNPNFRESSFRILTTVPYLITAVDINSILPIFQSGFTDASDNVKIAAVTAFVGYFKQLPKSEWSKLGILLPSLLNSLPRFLDDGKDDALASVFESLIELVELAPKLFKDMFDQIIQFTDMVIKNKDLEPPARTTALELLTVFSENAPQMCKSNQNYGQTLVMVTLIMMTEVSIDDDDAAEWIESDDTDDEEEVTYDHARQALDRVALKLGGEYLAAPLFQYLQQMITSTEWRERFAAMMALSSAAEGCADVLIGEIPKILDMVIPLINDPHPRVQYGCCNVLGQISTDFSPFIQRTAHDRILPALISKLTSECTSRVQTHAAAALVNFSEFASKDILEPYLDSLLTNLLVLLQSNKLYVQEQALTTIAFIAEAAKNKFIKYYDTLMPLLLNVLKVNNKDNSVLKGKCMECATLIGFAVGKEKFHEHSQELISILVALQNSDIDEDDALRSYLEQSWSRICRILGDDFVPLLPIVIPPLLITAKATQDVGLIEEEEAANFQQYPDWDVVQVQGKHIAIHTSVLDDKVSAMELLQSYATLLRGQFAVYVKEVMEEIALPSLDFYLHDGVRAAGATLIPILLSCLLAATGTQNEELVLLWHKASSKLIGGLMSEPMPEITQVYHNSLVNGIKVMGDNCLSEDQLAAFTKGVSANLTDTYERMQDRHGDGDEYNENIDEEEDFTDEDLLDEINKSIAAVLKTTNGHYLKNLENIWPMINTFLLDNEPILVIFALVVIGDLIQYGGEQTASMKNAFIPKVTECLISPDARIRQAASYIIGVCAQYAPSTYADVCIPTLDTLVQIVDFPGSKLEENRSSTENASAAIAKILYAYNSNIPNVDTYTANWFKTLPTITDKEAASFNYQFLSQLIENNSPIVCAQSNISAVVDSVIQALNERSLTEREGQTVISSVKKLLGFLPSSDAMAIFNRYPADIMEKVHKWFA.

At Ser2 the chain carries N-acetylserine. HEAT repeat units follow at residues 6–39 (EEVNRTLLQIVQAFASPDNQIRSVAEKALSEEWI), 44–78 (IEYLLTFLAEQAAFSQDTTVAALSAVLFRKLALKA), 96–129 (KEVLAQIRSSLLKGFLSERADSIRHKLSDAIAEC), 138–165 (PELLQALIESLKSGNPNFRESSFRILTT), 175–207 (INSILPIFQSGFTDASDNVKIAAVTAFVGYFKQ), 216–252 (LGILLPSLLNSLPRFLDDGKDDALASVFESLIELVEL), 260–295 (MFDQIIQFTDMVIKNKDLEPPARTTALELLTVFSEN), 304–359 (QNYG…ALKL), 361–395 (GEYLAAPLFQYLQQMITSTEWRERFAAMMALSSAA), 399–439 (ADVL…STDF), 441–481 (PFIQ…FSEF), 484–524 (KDIL…AEAA), 526–568 (NKFI…GFAV), 571–613 (EKFH…CRIL), 615–689 (DDFV…ATLL), 692–735 (QFAV…LLAA), 742–781 (ELVLLWHKASSKLIGGLMSEPMPEITQVYHNSLVNGIKVM), 788–849 (EDQL…LKTT), 852–890 (HYLKNLENIWPMINTFLLDNEPILVIFALVVIGDLIQYG), 898–930 (KNAFIPKVTECLISPDARIRQAASYIIGVCAQY), 938–978 (VCIP…LYAY), 986–1017 (DTYTANWFKTLPTITDKEAASFNYQFLSQLIE), 1028–1063 (NISAVVDSVIQALNERSLTEREGQTVISSVKKLLGF), and 1066–1089 (SSDAMAIFNRYPADIMEKVHKWFA). A Phosphothreonine modification is found at Thr830.

It belongs to the importin beta family. Importin beta-3 subfamily. Interacts with Ran (GSP1); interacts specifically with the GTP-bound form of Ran (GTP-Ran), protecting it from GTP hydrolysis and nucleotide exchange. Interacts with RPL25; this interaction is dissociated by binding to Ran-GTP. Interacts with YAP1; this interaction is dissociated by binding to Ran-GTP. Interacts with NOP1; via its rg-NLS. Interacts with SOF1; via its cNLS. Interacts with histones H3 and H4; via their NLS. Interacts with ABF1.

It is found in the cytoplasm. It localises to the nucleus. Functionally, functions in nuclear protein import as nuclear transport receptor. Serves as receptor for classical and arginine/glycine-rich nuclear localization signals (cNLS and rg-NLS) in cargo substrates. Its predominant cargo substrate seems to be ribosomal proteins and ribosome biogenesis trans- and cis-acting factors. Required for nuclear transport of YAP1, NOP1 and SOF1. Mediates the nuclear import of histones H3 and H4. Mediates docking of the importin/substrate complex to the nuclear pore complex (NPC) through binding to repeat-containing nucleoporins. The complex is subsequently translocated through the pore by an energy requiring, Ran-dependent mechanism. At the nucleoplasmic side of the NPC, GTP-Ran binding leads to release of the cargo. The importin is re-exported from the nucleus to the cytoplasm where GTP hydrolysis releases Ran from importin. The directionality of nuclear import is thought to be conferred by an asymmetric distribution of the GTP- and GDP-bound forms of Ran between the cytoplasm and nucleus. Plays a role in protein secretion. This is Importin subunit beta-3 from Saccharomyces cerevisiae (strain ATCC 204508 / S288c) (Baker's yeast).